The primary structure comprises 331 residues: Retinol dehydrogenase 13 (331 aa).

An N-acetylserine modification is found at serine 2. 45-51 contacts NADP(+); sequence GANTGIG. Position 174 (serine 174) interacts with substrate. Tyrosine 200 functions as the Proton acceptor in the catalytic mechanism. A Phosphoserine modification is found at serine 323.

Belongs to the short-chain dehydrogenases/reductases (SDR) family. As to expression, widely expressed. In the retina, detected in the inner segment of the photoreceptor cells. Weak signals are observed in a small population of inner nuclear neurons and the inner plexiform layer.

It localises to the mitochondrion inner membrane. The enzyme catalyses all-trans-retinol + NADP(+) = all-trans-retinal + NADPH + H(+). It participates in cofactor metabolism; retinol metabolism. Functionally, retinol dehydrogenase with a clear preference for NADP. Oxidizes all-trans-retinol, but seems to reduce all-trans-retinal with much higher efficiency. Has no activity toward steroids. The polypeptide is Retinol dehydrogenase 13 (RDH13) (Homo sapiens (Human)).